The sequence spans 839 residues: Probable alpha-glucuronidase A (839 aa).

Positions 1–18 (MRWSFLTVLLWLVSLTGA) are cleaved as a signal peptide. N-linked (GlcNAc...) asparagine glycans are attached at residues Asn-49, Asn-101, Asn-148, Asn-221, Asn-278, Asn-309, Asn-342, Asn-464, Asn-526, Asn-575, Asn-681, and Asn-731.

It belongs to the glycosyl hydrolase 67 family.

The protein localises to the secreted. It catalyses the reaction an alpha-D-glucuronoside + H2O = D-glucuronate + an alcohol. Its function is as follows. Alpha-glucuronidase involved in the hydrolysis of xylan, a major structural heterogeneous polysaccharide found in plant biomass representing the second most abundant polysaccharide in the biosphere, after cellulose. Releases 4-O-methylglucuronic acid from xylan. This Aspergillus flavus (strain ATCC 200026 / FGSC A1120 / IAM 13836 / NRRL 3357 / JCM 12722 / SRRC 167) protein is Probable alpha-glucuronidase A (aguA).